A 130-amino-acid polypeptide reads, in one-letter code: Protein YoeA (130 aa).

The N-terminal stretch at 1–28 (MLYNIPCRIYILSTLSLCISGIVSTATA) is a signal peptide. Residues 51–130 (NLWESPATIQ…RCRRYSRGER (80 aa)) form the TBDR plug domain.

Belongs to the TonB-dependent receptor family.

This chain is Protein YoeA (yoeA), found in Escherichia coli (strain K12).